The following is a 394-amino-acid chain: Flavin-dependent monooxygenase, oxygenase subunit HsaA (394 aa).

Residues W84, 118 to 120, 141 to 143, R263, 346 to 347, and 368 to 369 each bind FMN; these read SSY, WSS, AT, and HA.

This sequence belongs to the HpaH/HsaA monooxygenase family. Homotetramer under anaerobic conditions. HsaAB monooxygenase consists of an oxygenase component HsaA and a reductase component HsaB.

It carries out the reaction 3-hydroxy-9,10-secoandrosta-1,3,5(10)-triene-9,17-dione + FMNH2 + O2 = 3,4-dihydroxy-9,10-secoandrosta-1,3,5(10)-triene-9,17-dione + FMN + H2O + H(+). Its pathway is lipid metabolism; steroid biosynthesis. In terms of biological role, catalyzes the o-hydroxylation of 3-hydroxy-9,10-secoandrosta-1,3,5(10)-triene-9,17-dione (3-HSA) to 3,4-dihydroxy-9,10-secoandrosta-1,3,5(10)-triene-9,17-dione (3,4-DHSA) in the catabolism of cholesterol. This Mycobacterium tuberculosis (strain CDC 1551 / Oshkosh) protein is Flavin-dependent monooxygenase, oxygenase subunit HsaA.